The chain runs to 133 residues: Putative redox protein FMP46, mitochondrial (133 aa).

The N-terminal 21 residues, 1 to 21, are a transit peptide targeting the mitochondrion; it reads MSFWKTLQRQPRTISLFTNDI. Cysteine 97 is an active-site residue.

The protein belongs to the FMP46 family.

The protein localises to the mitochondrion. Its function is as follows. Putative mitochondrial redox protein which could be involved in the reduction of small toxic molecules. In Saccharomyces cerevisiae (strain ATCC 204508 / S288c) (Baker's yeast), this protein is Putative redox protein FMP46, mitochondrial (FMP46).